The sequence spans 467 residues: MSQLLTARQAEELHKSIIAYLASVNLTESSAALRAELGDSVSIDDATLKKYEGLLEKKWTSVVRLQKKIMDLESRCAALQSELDSATPTSLLRKNQDPTSWLPRSPARHILEGHRNPVTCVAFHPVFSSLASGSDDTTIKIWDWELGELERTVKGHTKAVLDVDYGGPRGGTLLASCSSDLTIKLWDPSDNYKNIRTLPGHDHSVSSVRFIPSGAAGSPMSGNLLVSASRDKTLRIWDVTTGYCVKTLSGHVDWVRAVAPSIDGRFLLAAGDDRIPRLWDLSSAETKSTFLGHEHVIECVAIAPAASYPHLAVLSGLKKPPPASSSAEFFATGSRDKTIRLWDSRGNLIKTLVGHDNWVRALAFHPGGKHLLSVADDKTIRCWDLTQECKCVRVISDAHGHFVTCLRWAPPLIKDGGANGEAETNGTPAATSTTNGVRPDPNVATKISIRCVIATGSVDQKVRIFAT.

The LisH domain occupies 9–41 (QAEELHKSIIAYLASVNLTESSAALRAELGDSV). Positions 60–87 (TSVVRLQKKIMDLESRCAALQSELDSAT) form a coiled coil. 8 WD repeats span residues 113–154 (GHRN…RTVK), 156–196 (HTKA…KNIR), 200–247 (GHDH…CVKT), 250–289 (GHVD…TKST), 292–352 (GHEH…IKTL), 354–393 (GHDN…KCVR), 398–428 (AHGH…NGTP), and 429–466 (AATS…RIFA). Positions 417–439 (GANGEAETNGTPAATSTTNGVRP) are disordered. Residues 422 to 436 (AETNGTPAATSTTNG) are compositionally biased toward polar residues.

This sequence belongs to the WD repeat LIS1/nudF family. Self-associates. Interacts with nudE and dynein.

Its subcellular location is the cytoplasm. The protein localises to the cytoskeleton. It localises to the spindle pole. Positively regulates the activity of the minus-end directed microtubule motor protein dynein. May enhance dynein-mediated microtubule sliding by targeting dynein to the microtubule plus end. Required for nuclear migration during vegetative growth as well as development. Required for retrograde early endosome (EE) transport from the hyphal tip. Required for localization of dynein to the mitotic spindle poles. Recruits additional proteins to the dynein complex at SPBs. This Aspergillus fumigatus (strain CBS 144.89 / FGSC A1163 / CEA10) (Neosartorya fumigata) protein is Nuclear distribution protein nudF.